Consider the following 348-residue polypeptide: Uroporphyrinogen decarboxylase (348 aa).

Substrate is bound by residues 27-31 (RQAGR), Phe-46, Asp-76, Tyr-152, Ser-207, and His-320.

The protein belongs to the uroporphyrinogen decarboxylase family. In terms of assembly, homodimer.

It is found in the cytoplasm. It catalyses the reaction uroporphyrinogen III + 4 H(+) = coproporphyrinogen III + 4 CO2. It functions in the pathway porphyrin-containing compound metabolism; protoporphyrin-IX biosynthesis; coproporphyrinogen-III from 5-aminolevulinate: step 4/4. Its function is as follows. Catalyzes the decarboxylation of four acetate groups of uroporphyrinogen-III to yield coproporphyrinogen-III. This Bacillus anthracis protein is Uroporphyrinogen decarboxylase.